The primary structure comprises 263 residues: Hydroxyethylthiazole kinase 1 (263 aa).

Residue Met-42 participates in substrate binding. The ATP site is built by Lys-118 and Thr-164. Gly-191 provides a ligand contact to substrate.

It belongs to the Thz kinase family. The cofactor is Mg(2+).

The catalysed reaction is 5-(2-hydroxyethyl)-4-methylthiazole + ATP = 4-methyl-5-(2-phosphooxyethyl)-thiazole + ADP + H(+). It functions in the pathway cofactor biosynthesis; thiamine diphosphate biosynthesis; 4-methyl-5-(2-phosphoethyl)-thiazole from 5-(2-hydroxyethyl)-4-methylthiazole: step 1/1. In terms of biological role, catalyzes the phosphorylation of the hydroxyl group of 4-methyl-5-beta-hydroxyethylthiazole (THZ). The protein is Hydroxyethylthiazole kinase 1 of Clostridium botulinum (strain Langeland / NCTC 10281 / Type F).